The chain runs to 1025 residues: AP-2 complex subunit alpha (1025 aa).

The disordered stretch occupies residues 713–737 (RSIMVPMPPPSRRNTIDDVNSKISS). Threonine 727 is modified (phosphothreonine). Position 733 is a phosphoserine (serine 733).

The protein belongs to the adaptor complexes large subunit family. Adaptor protein complex 2 (AP-2) is a heterotetramer composed of two large adaptins (alpha-type subunit APL3 and beta-type subunit APL1), a medium chain (mu-type subunit APM4) and a small adaptin (sigma-type subunit APS2).

The protein resides in the cell membrane. It localises to the membrane. The protein localises to the coated pit. Adaptins are components of the adaptor complexes which link clathrin to receptors in coated vesicles. Clathrin-associated protein complexes are believed to interact with the cytoplasmic tails of membrane proteins, leading to their selection and concentration. Alpha adaptin is a subunit of the plasma membrane adaptor. Facilitates interaction between APL1 and APS2. This Saccharomyces cerevisiae (strain ATCC 204508 / S288c) (Baker's yeast) protein is AP-2 complex subunit alpha (APL3).